Reading from the N-terminus, the 410-residue chain is MALINDNYLKLKAGYLFPEIGRRVRAFAEANPSAKVIRLGIGDVTRPLAPAVLKAFHAAVDDLGTTDNFAGYGPEQGYDWLINAIIEKSYKPLGVSLKTDEMFISDGSKCDCANILDIFALDNVVAIGDPVYPVYNDTNVMIGRTGEADDKGYYKGIVYMPCNEENHFIPSLPTEKVDIIYLCFPNNPTGTVASRAELKKWVDYANANDAVIFFDAAYEAFITDPEIPHSIYEIEGAKKCAIEFRSFSKTAGFTGVRCGLVVVPEEVMGTTSTGERYSFNKLWLRRTTTKFNGASYPVQRAAEAVYSDEGWKQTKEIIDYYMENARIIREGMKEAGLTVYGGVNAPYIWLKTPAGMTSWDFFDKLLTECNVVGTPGSGFGPSGEGYFRLSAFGHRENVIEAVERIKKNLK.

2 residues coordinate substrate: Y15 and G42. Residues Y72, 108–109, Y132, N187, Y218, and 246–248 each bind pyridoxal 5'-phosphate; these read SK and SFS. K109, Y132, and N187 together coordinate substrate. At K249 the chain carries N6-(pyridoxal phosphate)lysine. Pyridoxal 5'-phosphate is bound by residues R257 and N292. Substrate-binding residues include N292 and R388.

Belongs to the class-I pyridoxal-phosphate-dependent aminotransferase family. LL-diaminopimelate aminotransferase subfamily. As to quaternary structure, homodimer. Pyridoxal 5'-phosphate serves as cofactor.

The catalysed reaction is (2S,6S)-2,6-diaminopimelate + 2-oxoglutarate = (S)-2,3,4,5-tetrahydrodipicolinate + L-glutamate + H2O + H(+). Its pathway is amino-acid biosynthesis; L-lysine biosynthesis via DAP pathway; LL-2,6-diaminopimelate from (S)-tetrahydrodipicolinate (aminotransferase route): step 1/1. Its function is as follows. Involved in the synthesis of meso-diaminopimelate (m-DAP or DL-DAP), required for both lysine and peptidoglycan biosynthesis. Catalyzes the direct conversion of tetrahydrodipicolinate to LL-diaminopimelate. This is LL-diaminopimelate aminotransferase from Geotalea uraniireducens (strain Rf4) (Geobacter uraniireducens).